Reading from the N-terminus, the 876-residue chain is Alanine--tRNA ligase (876 aa).

At Lys-74 the chain carries N6-acetyllysine. Residues His-564, His-568, Cys-666, and His-670 each contribute to the Zn(2+) site.

The protein belongs to the class-II aminoacyl-tRNA synthetase family. Homotetramer. Requires Zn(2+) as cofactor.

Its subcellular location is the cytoplasm. The catalysed reaction is tRNA(Ala) + L-alanine + ATP = L-alanyl-tRNA(Ala) + AMP + diphosphate. Functionally, catalyzes the attachment of alanine to tRNA(Ala) in a two-step reaction: alanine is first activated by ATP to form Ala-AMP and then transferred to the acceptor end of tRNA(Ala). Also edits incorrectly charged Ser-tRNA(Ala) and Gly-tRNA(Ala) via its editing domain. This Shigella boydii serotype 4 (strain Sb227) protein is Alanine--tRNA ligase.